The following is a 144-amino-acid chain: (R)-specific enoyl-CoA hydratase (144 aa).

The 116-residue stretch at 13–128 (DIKEGQSASL…TFRTTCTVAG (116 aa)) folds into the MaoC-like domain.

Homotetramer.

It catalyses the reaction a (3R)-3-hydroxyacyl-CoA = a (2E)-enoyl-CoA + H2O. In terms of biological role, catalyzes the hydration of trans-2-enoyl-CoAs with a chain-length of 4-6 carbon atoms, forming the corresponding (3R)-3-hydroxyacyl-CoAs, which can then be utilized for the production of polyhydroxyalkanoates (PHA) polymers. Cannot use trans-2,3-octenoyl-CoA as substrate. The protein is (R)-specific enoyl-CoA hydratase of Rhodospirillum rubrum (strain ATCC 11170 / ATH 1.1.1 / DSM 467 / LMG 4362 / NCIMB 8255 / S1).